We begin with the raw amino-acid sequence, 323 residues long: Mortality factor 4-like protein 1 (323 aa).

A Tudor-knot domain is found at 12–62; the sequence is QEGERVLCFHGPLLYEAKCVKVAIKDKQVKYFIHHSGWNKNWDEWVPESRV. The disordered stretch occupies residues 76-143; that stretch reads LQKANQEQYA…RKKRARVDPT (68 aa). Residues 94–227 form a sufficient for interaction with SIN3A region; it reads PGKKTSGLQQ…VAGIKEYFNV (134 aa). Residues 96 to 107 carry the Nuclear localization signal motif; it reads KKTSGLQQKNVD. The residue at position 104 (Lys-104) is an N6-acetyllysine. Positions 125 to 191 are interaction with RB1-1; that stretch reads STSETPQPPR…FYLPAKKNVD (67 aa). The interval 149–303 is sufficient for interaction with PHF12; the sequence is TFMNRVEVKV…FLKYLAKNSA (155 aa). Positions 152 to 323 constitute an MRG domain; sequence NRVEVKVKIP…APPEYHRKAV (172 aa). Positions 284-305 are interaction with RB1-2; the sequence is LALLLNYLHDFLKYLAKNSATL.

Component of the NuA4 histone acetyltransferase complex which contains the catalytic subunit KAT5/TIP60 and the subunits EP400, TRRAP/PAF400, BRD8/SMAP, EPC1, DMAP1/DNMAP1, RUVBL1/TIP49, RUVBL2, ING3, actin, ACTL6A/BAF53A, MORF4L1/MRG15, MORF4L2/MRGX, MRGBP, YEATS4/GAS41, VPS72/YL1 and MEAF6. The NuA4 complex interacts with MYC and the adenovirus E1A protein. MORF4L1 may also participate in the formation of NuA4 related complexes which lack the KAT5/TIP60 catalytic subunit, but which include the SWI/SNF related protein SRCAP. Component of the mSin3A histone deacetylase complex, which includes SIN3A, HDAC2, ARID4B, MORF4L1, RBBP4/RbAp48, and RBBP7/RbAp46. May also interact with PHF12 and one or more as yet undefined members of the TLE (transducin-like enhancer of split) family of transcriptional repressors. Component of the SIN3B complex, which includes SIN3B, HDAC2 or HDAC1, PHF12 and MORF4L1. Interacts with RB1 and KAT8. Interacts with the N-terminus of MRFAP1. Found in a complex composed of MORF4L1, MRFAP1 and RB1. Interacts with the entire BRCA complex, which contains BRCA1, PALB2, BRCA2 and RAD51. Interacts with PALB2. Forms a complex with MSL1 and NUPR1.

The protein localises to the nucleus. Its function is as follows. Component of the NuA4 histone acetyltransferase (HAT) complex which is involved in transcriptional activation of select genes principally by acetylation of nucleosomal histones H4 and H2A. This modification may both alter nucleosome - DNA interactions and promote interaction of the modified histones with other proteins which positively regulate transcription. This complex may be required for the activation of transcriptional programs associated with oncogene and proto-oncogene mediated growth induction, tumor suppressor mediated growth arrest and replicative senescence, apoptosis, and DNA repair. The NuA4 complex ATPase and helicase activities seem to be, at least in part, contributed by the association of RUVBL1 and RUVBL2 with EP400. NuA4 may also play a direct role in DNA repair when directly recruited to sites of DNA damage. As part of the SIN3B complex represses transcription and counteracts the histone acetyltransferase activity of EP300 through the recognition H3K27ac marks by PHF12 and the activity of the histone deacetylase HDAC2. SIN3B complex is recruited downstream of the constitutively active genes transcriptional start sites through interaction with histones and mitigates histone acetylation and RNA polymerase II progression within transcribed regions contributing to the regulation of transcription. Required for homologous recombination repair (HRR) and resistance to mitomycin C (MMC). Involved in the localization of PALB2, BRCA2 and RAD51, but not BRCA1, to DNA-damage foci. The polypeptide is Mortality factor 4-like protein 1 (MORF4L1) (Pongo abelii (Sumatran orangutan)).